A 145-amino-acid polypeptide reads, in one-letter code: Putative phosphatidylglycerol/phosphatidylinositol transfer protein DDB_G0282179 (145 aa).

An N-terminal signal peptide occupies residues 1–20 (MIKTILLLLINFMLILIVNG). N-linked (GlcNAc...) asparagine glycosylation occurs at N134.

This sequence belongs to the NPC2 family. As to quaternary structure, monomer.

Functionally, catalyzes the intermembrane transfer of phosphatidylglycerol and phosphatidylinositol. In Dictyostelium discoideum (Social amoeba), this protein is Putative phosphatidylglycerol/phosphatidylinositol transfer protein DDB_G0282179.